The chain runs to 175 residues: Large ribosomal subunit protein bL9 (175 aa).

Belongs to the bacterial ribosomal protein bL9 family.

Its function is as follows. Binds to the 23S rRNA. This is Large ribosomal subunit protein bL9 from Orientia tsutsugamushi (strain Boryong) (Rickettsia tsutsugamushi).